A 962-amino-acid chain; its full sequence is MTKQTLTQLEQHDLFLRRHIGPDSNQQQAMLNFVGAESLEDLTAQIVPESIRLSQDLSIGDSCGEAEGIAYIRGLADQNQVFKSYIGMGYYGTQVPNVILRNVFENPGWYTAYTPYQPEIAQGRLEAILNFQQVSMDLTGLDLASASLLDEATAAAEAMALAKRVSKAKKANIFFVADDVFPQTLDVVKTRAECFGFEVVVGPASEAVNYELFGALFQYTNRFGQITDFTELFATLRAKNVIVTVAADIMSLVLLKSPGSMGADVVFGSAQRFGVPMGFGGPHAAFFVARDEHKRSMPGRIIGVSKDARGNRALRMAMQTREQHIRREKANSNICTAQILLANMASFYAVFHGPDGLKTIASRIHRFADILAAGLQAKGVSLVNSTWFDTISIKGLDVAAVNARALAAEMNLRFDADGTVGVSLDETTLRTDIDALFDVILGAGHGLDVAALDAQIVGQGSQSIPAALVRQDAILSHPTFNRYQSETEMMRYIKRLESKDLALNYSMISLGSCTMKLNAAVEMLPVSWPEFANMHPFSPLDQAKGYTQLIEELSTWLVNITGYDAVCIQPNSGAQGEYAGLLAIKKYHESRGDAHRNICLIPQSAHGTNPASAQLAGMQVVVTACDKQGNVDLDDLKTKAAEVAGNLSCIMITYPSTHGVYEESIREICDIVHQHGGQVYLDGANMNAQVGLTSPGFIGADVSHLNLHKTFAIPHGGGGPGMGPIGVKSHLAPFVAGHVVVKPGRESDHNGAVSAAPYGSAGILPISWMYIKLLGSQGLKKSTQTALLNANYVMKKLSEHYPVLFRGRNDRVAHECIIDLRPLKEASGVTEMDIAKRLNDYGFHAPTMSFPVAGTLMIEPTESESKVELDRFIDAMVSIRAEIAKVESGEWPVDNNPLHNAPHTMADIMDPEFDTRPYSREVAVFPSAAVRTNKFWPTVNRIDDVYGDRNLMCSCAPLSDYE.

Lysine 709 is modified (N6-(pyridoxal phosphate)lysine).

This sequence belongs to the GcvP family. As to quaternary structure, the glycine cleavage system is composed of four proteins: P, T, L and H. Requires pyridoxal 5'-phosphate as cofactor.

The catalysed reaction is N(6)-[(R)-lipoyl]-L-lysyl-[glycine-cleavage complex H protein] + glycine + H(+) = N(6)-[(R)-S(8)-aminomethyldihydrolipoyl]-L-lysyl-[glycine-cleavage complex H protein] + CO2. Its function is as follows. The glycine cleavage system catalyzes the degradation of glycine. The P protein binds the alpha-amino group of glycine through its pyridoxal phosphate cofactor; CO(2) is released and the remaining methylamine moiety is then transferred to the lipoamide cofactor of the H protein. This is Glycine dehydrogenase (decarboxylating) from Shewanella baltica (strain OS223).